A 734-amino-acid chain; its full sequence is Putative protocadherin beta-18 (734 aa).

Cadherin domains are found at residues 1–79, 80–188, 189–293, 294–398, and 399–508; these read MWKT…TPTF, LNNH…APEF, EKPV…PPEI, AMTS…APIF, and TQTS…SPFV. An N-linked (GlcNAc...) asparagine glycan is attached at Asn-115. N-linked (GlcNAc...) asparagine glycosylation is found at Asn-365 and Asn-383. Asn-514 carries N-linked (GlcNAc...) asparagine glycosylation. The Cadherin 6 domain occupies 515–621; it reads GSAPCTELVP…GFSQPYLPLT (107 aa). A helical transmembrane segment spans residues 638 to 658; that stretch reads VVALASVSSLFLFSVFLFVAV.

The protein resides in the cell membrane. Its function is as follows. Potential calcium-dependent cell-adhesion protein. In Homo sapiens (Human), this protein is Putative protocadherin beta-18 (PCDHB18P).